We begin with the raw amino-acid sequence, 83 residues long: Kunitz-type serine protease inhibitor PILP-2 (83 aa).

Residues Met-1–Ser-24 form the signal peptide. Residues Cys-31–Cys-81 enclose the BPTI/Kunitz inhibitor domain. 3 disulfide bridges follow: Cys-31/Cys-81, Cys-40/Cys-64, and Cys-56/Cys-77.

The protein belongs to the venom Kunitz-type family. Expressed by the venom gland.

It localises to the secreted. Its function is as follows. Shows weak binding and inhibition of MMP-2 and shows an activity in inhibiting migration and invasion of neuroblastoma. This is Kunitz-type serine protease inhibitor PILP-2 from Bungarus multicinctus (Many-banded krait).